The primary structure comprises 311 residues: MIERLNSPFLRAAALFTIVAFSSLISTAALAENNPSDTAKKFKVVTTFTIIQDIAQNIAGDVAVVESITKPGAEIHDYQPTPRDIVKAQSADLILWNGMNLERWFEKFFESIKDVPSAVVTAGITPLPIREGPYSGIANPHAWMSPSNALIYIENIRKALVEHDPAHAETYNRNAQAYAEKIKALDAPLRERLSRIPAEQRWLVTSEGAFSYLAKDYGFKEVYLWPINAEQQGIPQQVRHVIDIIRENKIPVVFSESTISDKPAKQVSKETGAQYGGVLYVDSLSGEKGPVPTYISLINMTVDTIAKGFGQ.

The first 31 residues, 1–31, serve as a signal peptide directing secretion; the sequence is MIERLNSPFLRAAALFTIVAFSSLISTAALA. The Fe(2+) site is built by His76, His141, Glu207, and Asp282.

This sequence belongs to the bacterial solute-binding protein 9 family. Monomer.

Its subcellular location is the periplasm. Functionally, part of the ATP-binding cassette (ABC) transport system YfeABC involved in iron import. Binds iron with high affinity and specificity and delivers it to the membrane permease for translocation into the cytoplasm. Also binds Mn(2+) and Zn(2+). The protein is Iron-binding protein YfeA (yfeA) of Yersinia pestis.